Consider the following 333-residue polypeptide: Procathepsin L (333 aa).

Positions 1–17 are cleaved as a signal peptide; sequence MNPTFILAALCLGIASA. The propeptide at 18–113 is activation peptide; it reads TLTFNHSLEA…KVFQEPLFYE (96 aa). E122 serves as a coordination point for Zn(2+). 2 disulfides stabilise this stretch: C135–C178 and C169–C211. C138 is a catalytic residue. The Zn(2+) site is built by E163, D184, E199, E205, E209, D227, D250, H253, D273, and D275. C269 and C322 are disulfide-bonded. The active site involves H276. Positions 289–291 are excised as a propeptide; it reads ESD. N300 is an active-site residue.

This sequence belongs to the peptidase C1 family. Dimer of a heavy and a light chain linked by disulfide bonds. Interacts with Long isoform of CD74/Ii chain; the interaction stabilizes the conformation of mature CTSL. In terms of processing, during export along the endocytic pathway, pro-CTSL undergoes several proteolytic cleavages to generate the CTSL single-chain and two-chain mature forms, composed of a heavy chain linked to a light chain by disulfide bonds. Autocleavage; produces the single-chain CTSL after cleavage of the propeptide. The cleavage can be intermolecular.

The protein localises to the lysosome. The protein resides in the apical cell membrane. Its subcellular location is the cytoplasmic vesicle. It localises to the secretory vesicle. It is found in the chromaffin granule. The protein localises to the secreted. The protein resides in the extracellular space. The enzyme catalyses Specificity close to that of papain. As compared to cathepsin B, cathepsin L exhibits higher activity toward protein substrates, but has little activity on Z-Arg-Arg-NHMec, and no peptidyl-dipeptidase activity.. Inhibited by the propeptide produced by autocleavage. Long isoform of CD74/Ii chain stabilizes the conformation of mature CTSL by binding to its active site and serving as a chaperone to help maintain a pool of mature enzyme in endocytic compartments and extracellular space of APCs. IFNG enhances the conversion into the CTSL mature and active form. Inhibited by CST6. Inhibited by the glycopeptide antibiotic teicoplanin. Inhibited by amantadine. In terms of biological role, thiol protease important for the overall degradation of proteins in lysosomes. Plays a critical for normal cellular functions such as general protein turnover, antigen processing and bone remodeling. Involved in the solubilization of cross-linked TG/thyroglobulin and in the subsequent release of thyroid hormone thyroxine (T4) by limited proteolysis of TG/thyroglobulin in the thyroid follicle lumen. In neuroendocrine chromaffin cells secretory vesicles, catalyzes the prohormone proenkephalin processing to the active enkephalin peptide neurotransmitter. In thymus, regulates CD4(+) T cell positive selection by generating the major histocompatibility complex class II (MHCII) bound peptide ligands presented by cortical thymic epithelial cells. Also mediates invariant chain processing in cortical thymic epithelial cells. Major elastin-degrading enzyme at neutral pH. Accumulates as a mature and active enzyme in the extracellular space of antigen presenting cells (APCs) to regulate degradation of the extracellular matrix in the course of inflammation. Secreted form generates endostatin from COL18A1. Critical for cardiac morphology and function. Plays an important role in hair follicle morphogenesis and cycling, as well as epidermal differentiation. Required for maximal stimulation of steroidogenesis by TIMP1. The protein is Procathepsin L (CTSL) of Chlorocebus aethiops (Green monkey).